The following is a 96-amino-acid chain: Putative pterin-4-alpha-carbinolamine dehydratase (96 aa).

The protein belongs to the pterin-4-alpha-carbinolamine dehydratase family.

The catalysed reaction is (4aS,6R)-4a-hydroxy-L-erythro-5,6,7,8-tetrahydrobiopterin = (6R)-L-erythro-6,7-dihydrobiopterin + H2O. This chain is Putative pterin-4-alpha-carbinolamine dehydratase, found in Rhodospirillum rubrum (strain ATCC 11170 / ATH 1.1.1 / DSM 467 / LMG 4362 / NCIMB 8255 / S1).